Reading from the N-terminus, the 437-residue chain is Trigger factor (437 aa).

In terms of domain architecture, PPIase FKBP-type spans 174 to 260; it reads GDFVQISFEG…VKSLKKKIFP (87 aa).

The protein belongs to the FKBP-type PPIase family. Tig subfamily.

Its subcellular location is the cytoplasm. The enzyme catalyses [protein]-peptidylproline (omega=180) = [protein]-peptidylproline (omega=0). Involved in protein export. Acts as a chaperone by maintaining the newly synthesized protein in an open conformation. Functions as a peptidyl-prolyl cis-trans isomerase. This Koribacter versatilis (strain Ellin345) protein is Trigger factor.